The sequence spans 1065 residues: DNA-directed RNA polymerase subunit beta (1065 aa).

The protein belongs to the RNA polymerase beta chain family. As to quaternary structure, in plastids the minimal PEP RNA polymerase catalytic core is composed of four subunits: alpha, beta, beta', and beta''. When a (nuclear-encoded) sigma factor is associated with the core the holoenzyme is formed, which can initiate transcription.

Its subcellular location is the plastid. The protein resides in the chloroplast. It carries out the reaction RNA(n) + a ribonucleoside 5'-triphosphate = RNA(n+1) + diphosphate. Functionally, DNA-dependent RNA polymerase catalyzes the transcription of DNA into RNA using the four ribonucleoside triphosphates as substrates. The protein is DNA-directed RNA polymerase subunit beta of Marchantia polymorpha (Common liverwort).